We begin with the raw amino-acid sequence, 307 residues long: Small ribosomal subunit biogenesis GTPase RsgA (307 aa).

Positions 64–229 (KNSLIRPSIA…IADTPGFSSL (166 aa)) constitute a CP-type G domain. GTP contacts are provided by residues 113 to 116 (SKLD) and 172 to 180 (GQTGAGKTT). Zn(2+) is bound by residues Cys-253, Cys-258, His-260, and Cys-266.

This sequence belongs to the TRAFAC class YlqF/YawG GTPase family. RsgA subfamily. In terms of assembly, monomer. Associates with 30S ribosomal subunit, binds 16S rRNA. Zn(2+) is required as a cofactor.

It localises to the cytoplasm. Functionally, one of several proteins that assist in the late maturation steps of the functional core of the 30S ribosomal subunit. Helps release RbfA from mature subunits. May play a role in the assembly of ribosomal proteins into the subunit. Circularly permuted GTPase that catalyzes slow GTP hydrolysis, GTPase activity is stimulated by the 30S ribosomal subunit. In Lactococcus lactis subsp. lactis (strain IL1403) (Streptococcus lactis), this protein is Small ribosomal subunit biogenesis GTPase RsgA.